The sequence spans 468 residues: 3-isopropylmalate dehydratase large subunit (468 aa).

The [4Fe-4S] cluster site is built by C346, C406, and C409.

The protein belongs to the aconitase/IPM isomerase family. LeuC type 1 subfamily. As to quaternary structure, heterodimer of LeuC and LeuD. It depends on [4Fe-4S] cluster as a cofactor.

It catalyses the reaction (2R,3S)-3-isopropylmalate = (2S)-2-isopropylmalate. It participates in amino-acid biosynthesis; L-leucine biosynthesis; L-leucine from 3-methyl-2-oxobutanoate: step 2/4. In terms of biological role, catalyzes the isomerization between 2-isopropylmalate and 3-isopropylmalate, via the formation of 2-isopropylmaleate. This is 3-isopropylmalate dehydratase large subunit from Cyanothece sp. (strain PCC 7425 / ATCC 29141).